We begin with the raw amino-acid sequence, 24 residues long: Large ribosomal subunit protein uL10 (24 aa).

It belongs to the universal ribosomal protein uL10 family. As to quaternary structure, part of the ribosomal stalk of the 50S ribosomal subunit. The N-terminus interacts with L11 and the large rRNA to form the base of the stalk. The C-terminus forms an elongated spine to which L12 dimers bind in a sequential fashion forming a multimeric L10(L12)X complex.

Forms part of the ribosomal stalk, playing a central role in the interaction of the ribosome with GTP-bound translation factors. This Enterobacter cloacae protein is Large ribosomal subunit protein uL10 (rplJ).